Here is a 297-residue protein sequence, read N- to C-terminus: Mitochondrial nicotinamide adenine dinucleotide transporter SLC25A52 (297 aa).

Solcar repeat units follow at residues 28–108, 116–200, and 209–296; these read VGEM…LSCL, PEFA…IKEH, and AHLV…LLKF. The next 6 membrane-spanning stretches (helical) occupy residues 34–51, 85–105, 118–138, 179–199, 215–235, and 268–289; these read YLCG…TYPI, LPPL…YEDL, FATH…FTPL, ILFR…PIKE, FIGG…INVV, and LFRG…INAT.

It belongs to the mitochondrial carrier (TC 2.A.29) family.

It is found in the mitochondrion inner membrane. It catalyses the reaction NAD(+)(in) = NAD(+)(out). Its function is as follows. Mitochondrial membrane carrier protein that mediates the import of NAD(+) into mitochondria. Compared to SLC25A51, SLC25A52-mediated transport is not essential for the import of NAD(+) in mitochondria. The transport mechanism, uniport or antiport, its electrogenicity and substrate selectivity, remain to be elucidated. The chain is Mitochondrial nicotinamide adenine dinucleotide transporter SLC25A52 from Homo sapiens (Human).